The chain runs to 433 residues: Probable oxaloacetate decarboxylase beta chain (433 aa).

The next 9 helical transmembrane spans lie at 13–35 (LFHL…YLAI), 125–147 (YLFY…GVGA), 162–184 (LLGA…LSSL), 189–211 (FSVA…AIYV), 215–237 (LAPE…VPMI), 267–289 (IGFP…PLLG), 309–328 (TAQN…SVGS), 340–362 (TIGI…VLMA), and 404–426 (FLLM…AAGV).

This sequence belongs to the GcdB/MmdB/OadB family. In terms of assembly, heterotrimer of an alpha, a beta and a gamma subunit. Requires Na(+) as cofactor.

The protein resides in the cell membrane. It carries out the reaction oxaloacetate + 2 Na(+)(in) + H(+) = pyruvate + 2 Na(+)(out) + CO2. Functionally, catalyzes the decarboxylation of oxaloacetate coupled to Na(+) translocation. This is Probable oxaloacetate decarboxylase beta chain (oadB) from Vibrio cholerae serotype O1 (strain ATCC 39315 / El Tor Inaba N16961).